The chain runs to 503 residues: Ell-associated factor Eaf (503 aa).

Polar residues-rich tracts occupy residues 143–158 and 170–189; these read PGQQ…TNVA and ENST…SRRN. Disordered regions lie at residues 143–223 and 251–503; these read PGQQ…PAWD and NGSQ…EDDD. Phosphoserine is present on S199. Residues 251 to 264 are compositionally biased toward polar residues; sequence NGSQANTSGSSTGS. Basic residues predominate over residues 281–296; sequence GKQRQAPHHGHAKRQQ. Residues 297–311 are compositionally biased toward polar residues; it reads RSSPPMVQQQPNFGR. Low complexity predominate over residues 312 to 326; sequence NSYNGGNNYAQQQQH. The span at 382 to 397 shows a compositional bias: acidic residues; it reads DSSDSDSGSDSDDSTE. 2 stretches are compositionally biased toward low complexity: residues 415-435 and 484-497; these read MHHQ…QQQH and NDLL…SSNS.

This sequence belongs to the EAF family.

It localises to the nucleus. Its function is as follows. Promotes transcriptional elongation by Su(Tpl)/ELL. Essential for development. The chain is Ell-associated factor Eaf from Drosophila ananassae (Fruit fly).